Consider the following 504-residue polypeptide: L-carnitine/gamma-butyrobetaine antiporter (504 aa).

The next 12 membrane-spanning stretches (helical) occupy residues 8–28 (AGIEPKVFFPPLIIVGILCWL), 51–71 (WGWAFEWYMVIMFGGWFWLVF), 92–112 (IFMMFASCTSAAVLFWGSIEI), 143–163 (GPLPWATYSFLSVAFAYFFFV), 195–215 (FYLVALILAMGTSLGLATPLV), 231–251 (LDAIIISCWILLNAICVAFGL), 263–283 (TYLSFLMLGWVFIVGGASFIV), 315–335 (AWTVFYWAWWVIYAIQMSIFL), 347–367 (LCLGMVSGLTAGTWLIWTYSG), 403–423 (LSTATMWGFFILCFIATVTLI), 446–466 (LLVRIGWSVLVGIIGIILLAL), and 475–495 (AIIAGGCPLFFVNIMVTLSFI).

The protein belongs to the BCCT transporter (TC 2.A.15) family. CaiT subfamily. As to quaternary structure, homotrimer.

The protein localises to the cell inner membrane. It catalyses the reaction 4-(trimethylamino)butanoate(in) + (R)-carnitine(out) = 4-(trimethylamino)butanoate(out) + (R)-carnitine(in). Its pathway is amine and polyamine metabolism; carnitine metabolism. In terms of biological role, catalyzes the exchange of L-carnitine for gamma-butyrobetaine. The chain is L-carnitine/gamma-butyrobetaine antiporter from Proteus sp. (strain LE138).